Consider the following 428-residue polypeptide: Trigger factor (428 aa).

In terms of domain architecture, PPIase FKBP-type spans 163–248; the sequence is GDTAVIDFEG…VHEIKEKRLP (86 aa).

Belongs to the FKBP-type PPIase family. Tig subfamily.

It is found in the cytoplasm. The enzyme catalyses [protein]-peptidylproline (omega=180) = [protein]-peptidylproline (omega=0). Its function is as follows. Involved in protein export. Acts as a chaperone by maintaining the newly synthesized protein in an open conformation. Functions as a peptidyl-prolyl cis-trans isomerase. The chain is Trigger factor from Geobacillus sp. (strain WCH70).